Reading from the N-terminus, the 139-residue chain is Large ribosomal subunit protein uL22 (139 aa).

Positions 1 to 21 (MTAPTPEFRNKKQRKQQVKLR) are disordered.

This sequence belongs to the universal ribosomal protein uL22 family. Part of the 50S ribosomal subunit.

This protein binds specifically to 23S rRNA; its binding is stimulated by other ribosomal proteins, e.g. L4, L17, and L20. It is important during the early stages of 50S assembly. It makes multiple contacts with different domains of the 23S rRNA in the assembled 50S subunit and ribosome. Its function is as follows. The globular domain of the protein is located near the polypeptide exit tunnel on the outside of the subunit, while an extended beta-hairpin is found that lines the wall of the exit tunnel in the center of the 70S ribosome. The chain is Large ribosomal subunit protein uL22 from Deinococcus deserti (strain DSM 17065 / CIP 109153 / LMG 22923 / VCD115).